Reading from the N-terminus, the 697-residue chain is Long-chain-fatty-acid--CoA ligase 6 (697 aa).

A helical; Signal-anchor for type III membrane protein membrane pass occupies residues 25 to 45; sequence LSATTLVSVGALAAVLAYWLT. The Cytoplasmic portion of the chain corresponds to 46–697; that stretch reads HRPKALQPPC…QIEELYLVSV (652 aa).

It belongs to the ATP-dependent AMP-binding enzyme family. Mg(2+) is required as a cofactor.

The protein resides in the mitochondrion outer membrane. Its subcellular location is the peroxisome membrane. The protein localises to the microsome membrane. It is found in the endoplasmic reticulum membrane. The catalysed reaction is a long-chain fatty acid + ATP + CoA = a long-chain fatty acyl-CoA + AMP + diphosphate. The enzyme catalyses (5Z,8Z,11Z,14Z)-eicosatetraenoate + ATP + CoA = (5Z,8Z,11Z,14Z)-eicosatetraenoyl-CoA + AMP + diphosphate. It carries out the reaction 15-hydroxy-(5Z,8Z,11Z,13E)-eicosatetraenoate + ATP + CoA = 15-hydroxy-(5Z,8Z,11Z,13E)-eicosatetraenoyl-CoA + AMP + diphosphate. It catalyses the reaction 12-hydroxy-(5Z,8Z,10E,14Z)-eicosatetraenoate + ATP + CoA = 12-hydroxy-(5Z,8Z,10E,14Z)-eicosatetraenoyl-CoA + AMP + diphosphate. The catalysed reaction is 5-hydroxy-(6E,8Z,11Z,14Z)-eicosatetraenoate + ATP + CoA = 5-hydroxy-(6E,8Z,11Z,14Z)-eicosatetraenoyl-CoA + AMP + diphosphate. The enzyme catalyses hexadecanoate + ATP + CoA = hexadecanoyl-CoA + AMP + diphosphate. It carries out the reaction (E)-hexadec-2-enoate + ATP + CoA = (2E)-hexadecenoyl-CoA + AMP + diphosphate. In terms of biological role, catalyzes the conversion of long-chain fatty acids to their active form acyl-CoA for both synthesis of cellular lipids, and degradation via beta-oxidation. Plays an important role in fatty acid metabolism in brain and the acyl-CoAs produced may be utilized exclusively for the synthesis of the brain lipid. The protein is Long-chain-fatty-acid--CoA ligase 6 (Acsl6) of Mus musculus (Mouse).